The chain runs to 210 residues: Orotate phosphoribosyltransferase (210 aa).

5-phospho-alpha-D-ribose 1-diphosphate is bound by residues R94, K98, H100, and 120 to 128 (EDLISTGGS). S124 serves as a coordination point for orotate.

It belongs to the purine/pyrimidine phosphoribosyltransferase family. PyrE subfamily. As to quaternary structure, homodimer. It depends on Mg(2+) as a cofactor.

It catalyses the reaction orotidine 5'-phosphate + diphosphate = orotate + 5-phospho-alpha-D-ribose 1-diphosphate. It functions in the pathway pyrimidine metabolism; UMP biosynthesis via de novo pathway; UMP from orotate: step 1/2. In terms of biological role, catalyzes the transfer of a ribosyl phosphate group from 5-phosphoribose 1-diphosphate to orotate, leading to the formation of orotidine monophosphate (OMP). The chain is Orotate phosphoribosyltransferase from Halalkalibacterium halodurans (strain ATCC BAA-125 / DSM 18197 / FERM 7344 / JCM 9153 / C-125) (Bacillus halodurans).